Consider the following 1445-residue polypeptide: Protein HUA2-LIKE 1 (1445 aa).

In terms of domain architecture, PWWP spans 20 to 77 (LGDLVLAKVKGFPAWPAKIGQPEDWNQAPDPKKHFVQFYGTGEIGFVTPPDIQPFTSE). 7 disordered regions span residues 133–197 (KYLN…SPDP), 211–302 (TCTD…DLNI), 319–356 (FENELGKSASGADESKRAAKRPRSEDAKDQKQCKSKRL), 409–439 (EHTSVSSFPGSLVKEGANHPEQKISSSSDSD), 460–491 (DDDDEDPKTPVHGGLSNIPIASTDAPKSANAS), 641–685 (GIPK…TSTP), and 797–835 (LTPSNHGRQSSSSNQAGTEENEERRFSSGHRSVGGSLSG). Polar residues-rich tracts occupy residues 173-187 (QDSSISNNRNTSPSS) and 211-225 (TCTDHSDGTGNNLVN). Composition is skewed to basic and acidic residues over residues 228-257 (RIIRKTTDDSNKRCKDEVRAKRVPDSRAAT), 274-293 (GQDHGSKKGQDHGCRKESSD), and 331-350 (DESKRAAKRPRSEDAKDQKQ). Polar residues-rich tracts occupy residues 660 to 673 (RVSSSHSQTANQRS) and 797 to 814 (LTPSNHGRQSSSSNQAGT). A CID domain is found at 838 to 979 (EAAISRDTFE…RYIGDLGASG (142 aa)). Positions 1110-1203 (PATTCATELP…SLPLQPGFAP (94 aa)) are disordered. Over residues 1124–1170 (GSPPLPHESPPSPPPQPPSSPPPPSSPPQLAPAPPPSDHCLPPPTAP) the composition is skewed to pro residues.

As to expression, expressed throughout young primordia, and vegetative and reproductive apices.

The protein resides in the nucleus. Functionally, probable transcription factor that acts with partial redundancy with HULK2 and HULK3. Plays diverse and essential roles in the control of plant development, physiology and flowering time. This Arabidopsis thaliana (Mouse-ear cress) protein is Protein HUA2-LIKE 1.